The primary structure comprises 145 residues: Toxin coregulated pilus biosynthesis protein H (145 aa).

Involved in TCP pilus biogenesis. This is Toxin coregulated pilus biosynthesis protein H (tcpH) from Vibrio cholerae serotype O1 (strain ATCC 39315 / El Tor Inaba N16961).